The chain runs to 20 residues: Trypsin inhibitor (20 aa).

Residues 1 to 20 form a disordered region; that stretch reads APSDTTIAETLTITEEFFPD.

As to expression, hemolymph.

It is found in the secreted. Its subcellular location is the extracellular space. Its function is as follows. Inhibits trypsin stoichiometrically. Also inhibits chymotrypsin very weakly. This Mythimna unipuncta (Armyworm moth) protein is Trypsin inhibitor.